A 427-amino-acid chain; its full sequence is Serine--tRNA ligase (427 aa).

231 to 233 (TAE) is a binding site for L-serine. ATP is bound at residue 262-264 (RSE). Residue Glu285 participates in L-serine binding. ATP is bound at residue 349 to 352 (EISS). Ser385 is a binding site for L-serine.

This sequence belongs to the class-II aminoacyl-tRNA synthetase family. Type-1 seryl-tRNA synthetase subfamily. As to quaternary structure, homodimer. The tRNA molecule binds across the dimer.

It is found in the cytoplasm. The catalysed reaction is tRNA(Ser) + L-serine + ATP = L-seryl-tRNA(Ser) + AMP + diphosphate + H(+). It carries out the reaction tRNA(Sec) + L-serine + ATP = L-seryl-tRNA(Sec) + AMP + diphosphate + H(+). Its pathway is aminoacyl-tRNA biosynthesis; selenocysteinyl-tRNA(Sec) biosynthesis; L-seryl-tRNA(Sec) from L-serine and tRNA(Sec): step 1/1. Functionally, catalyzes the attachment of serine to tRNA(Ser). Is also able to aminoacylate tRNA(Sec) with serine, to form the misacylated tRNA L-seryl-tRNA(Sec), which will be further converted into selenocysteinyl-tRNA(Sec). The sequence is that of Serine--tRNA ligase from Rhizobium leguminosarum bv. trifolii (strain WSM2304).